Here is a 249-residue protein sequence, read N- to C-terminus: Small ribosomal subunit protein eS6 (249 aa).

A Glycyl lysine isopeptide (Lys-Gly) (interchain with G-Cter in SUMO2) cross-link involves residue lysine 14. Glutamate 35 carries the post-translational modification ADP-ribosyl glutamic acid. Arginine 137 bears the (3R)-3-hydroxyarginine mark. A Phosphoserine modification is found at serine 148. At lysine 211 the chain carries N6-acetyllysine. Residues 217–229 (MKEAKEKRQEQIA) are compositionally biased toward basic and acidic residues. Residues 217-249 (MKEAKEKRQEQIAKRRRLSSLRASTSKSESSQK) are disordered. Residues serine 235 and serine 236 each carry the phosphoserine; by RPS6KA1, RPS6KA3, DAPK1 and PASK modification. Residues 236-249 (SLRASTSKSESSQK) show a composition bias toward low complexity. Serine 240, serine 242, serine 244, and serine 247 each carry phosphoserine.

It belongs to the eukaryotic ribosomal protein eS6 family. Component of the small ribosomal subunit. Part of the small subunit (SSU) processome, composed of more than 70 proteins and the RNA chaperone small nucleolar RNA (snoRNA) U3. In terms of processing, ribosomal protein S6 is the major substrate of protein kinases in eukaryote ribosomes. The phosphorylation is stimulated by growth factors, tumor promoting agents, and mitogens. It is dephosphorylated at growth arrest. Phosphorylated at Ser-235 and Ser-236 by RPS6KA1 and RPS6KA3; phosphorylation at these sites facilitates the assembly of the pre-initiation complex. Specifically hydroxylated (with R stereochemistry) at C-3 of Arg-137 by KDM8. Post-translationally, mono-ADP-ribosylation at Glu-35 by PARP16 inhibits polysome assembly and mRNA loading, thereby inhibiting protein translation.

The protein resides in the cytoplasm. It localises to the nucleus. The protein localises to the nucleolus. In terms of biological role, component of the 40S small ribosomal subunit. Plays an important role in controlling cell growth and proliferation through the selective translation of particular classes of mRNA. Part of the small subunit (SSU) processome, first precursor of the small eukaryotic ribosomal subunit. During the assembly of the SSU processome in the nucleolus, many ribosome biogenesis factors, an RNA chaperone and ribosomal proteins associate with the nascent pre-rRNA and work in concert to generate RNA folding, modifications, rearrangements and cleavage as well as targeted degradation of pre-ribosomal RNA by the RNA exosome. This chain is Small ribosomal subunit protein eS6 (RPS6), found in Bos taurus (Bovine).